A 64-amino-acid chain; its full sequence is Large ribosomal subunit protein bL35c (64 aa).

It belongs to the bacterial ribosomal protein bL35 family.

It localises to the plastid. Its subcellular location is the chloroplast. The polypeptide is Large ribosomal subunit protein bL35c (Thalassiosira pseudonana (Marine diatom)).